A 331-amino-acid polypeptide reads, in one-letter code: Glycerophosphodiester phosphodiesterase 1 (331 aa).

At 1–3 (MWL) the chain is on the cytoplasmic side. A helical membrane pass occupies residues 4 to 24 (WEDQGGLLGPFSFLLLVLLLV). The Lumenal portion of the chain corresponds to 25-247 (TRSPVNACLL…KPRYDTFWKH (223 aa)). The 267-residue stretch at 65 to 331 (ISAIAHRGGS…SMVEDCEPHF (267 aa)) folds into the GP-PDE domain. The Mg(2+) site is built by Glu-97 and Asp-99. N-linked (GlcNAc...) asparagine glycosylation occurs at Asn-168. A Mg(2+)-binding site is contributed by Asp-174. N-linked (GlcNAc...) asparagine glycosylation is present at Asn-198. Residues 248-268 (FIFVMMDILLDWSMHNILWYL) traverse the membrane as a helical segment. The Cytoplasmic segment spans residues 269–331 (CGISAFLMQK…SMVEDCEPHF (63 aa)).

The protein belongs to the glycerophosphoryl diester phosphodiesterase family. In terms of assembly, interacts with PRAF2. Interacts with RGS16. Mg(2+) serves as cofactor. Post-translationally, N-glycosylated. Widely expressed.

The protein localises to the cell membrane. It is found in the cytoplasmic vesicle membrane. It catalyses the reaction sn-glycero-3-phospho-1D-myo-inositol + H2O = myo-inositol + sn-glycerol 3-phosphate + H(+). The enzyme catalyses 1-O-(1Z-octadecenyl)-sn-glycero-3-phospho-(N-5Z,8Z,11Z,14Z-eicosatetraenoyl)-ethanolamine + H2O = 1-O-(1Z-octadecenyl)-sn-glycero-3-phosphate + N-(5Z,8Z,11Z,14Z-eicosatetraenoyl)-ethanolamine + H(+). It carries out the reaction 1-O-(1Z-octadecenyl)-sn-glycero-3-phospho-(N-9Z-octadecenoyl)-ethanolamine + H2O = 1-O-(1Z-octadecenyl)-sn-glycero-3-phosphate + N-(9Z-octadecenoyl) ethanolamine + H(+). The catalysed reaction is 1-O-(1Z-octadecenyl)-sn-glycero-3-phospho-N-hexadecanoyl-ethanolamine + H2O = 1-O-(1Z-octadecenyl)-sn-glycero-3-phosphate + N-hexadecanoylethanolamine + H(+). It catalyses the reaction N-(4Z,7Z,10Z,13Z,16Z,19Z)-docosahexaenoyl-sn-glycero-3-phosphoethanolamine + H2O = N-(4Z,7Z,10Z,13Z,16Z,19Z)-docosahexaenoyl ethanolamine + sn-glycerol 3-phosphate + H(+). The enzyme catalyses N-eicosanoyl-sn-glycero-3-phosphoethanolamine + H2O = N-eicosanoyl ethanolamine + sn-glycerol 3-phosphate + H(+). It carries out the reaction N-hexadecanoyl-sn-glycero-3-phosphoethanolamine + H2O = N-hexadecanoylethanolamine + sn-glycerol 3-phosphate + H(+). The catalysed reaction is N-(9Z-octadecenoyl)-sn-glycero-3-phosphoethanolamine + H2O = N-(9Z-octadecenoyl) ethanolamine + sn-glycerol 3-phosphate + H(+). It catalyses the reaction N-(5Z,8Z,11Z,14Z-eicosatetraenoyl)-sn-glycero-3-phosphoethanolamine + H2O = N-(5Z,8Z,11Z,14Z-eicosatetraenoyl)-ethanolamine + sn-glycerol 3-phosphate + H(+). Its activity is regulated as follows. Inhibited by EDTA, calcium chloride, and zinc chloride. Enhanced by magnesium chloride. Glycerophosphodiester phosphodiesterase activity can be modulated by G-protein signaling pathways. In terms of biological role, hydrolyzes the phosphodiester bond of glycerophosphodiesters such as glycerophosphoinositol (GroPIns) and glycerophosphoethanolamine (GroPEth), to yield a glycerol phosphate and an alcohol. Hydrolyzes glycerophospho-N-acylethanolamines to N-acylethanolamines in the brain and participates in bioactive N-acylethanolamine biosynthesis such as anandamide (an endocannabinoid), N-palmitoylethanolamine (an anti-inflammatory), and N-oleoylethanolamine (an anorexic). In addition, has a lysophospholipase D activity by hydrolyzing N-acyl-lysoplasmenylethanolamine (N-acyl-lysoPlsEt) to N-acylethanolamine. However lysophospholipase D activity is lower than glycerophosphodiester phosphodiesterase activity. Has little or no activity towards glycerophosphocholine. In Homo sapiens (Human), this protein is Glycerophosphodiester phosphodiesterase 1.